The primary structure comprises 139 residues: Glucanase inhibitor protein 3 (139 aa).

The region spanning Val-1 to Lys-138 is the Peptidase S1 domain. Cystine bridges form between Cys-61-Cys-73 and Cys-83-Cys-114.

Belongs to the peptidase S1 family.

The protein localises to the secreted. Secreted effector that suppresses host plant glucan elicitor-mediated defense responses. Targets host endoglucanases and inhibits the endoglucanase-mediated release of elicitor-active glucan oligosaccharides from P.sojae cell walls. The sequence is that of Glucanase inhibitor protein 3 from Phytophthora sojae (Soybean stem and root rot agent).